The chain runs to 238 residues: SPbeta prophage-derived uncharacterized protein YorM (238 aa).

An N-terminal signal peptide occupies residues 1 to 37 (MFKKLIDKHKKYVYHRINKMALFATIGLLGVGLVYSA). A compositionally biased stretch (basic residues) spans 111-121 (TKTKKVQKTNT). The disordered stretch occupies residues 111–132 (TKTKKVQKTNTKRNLDKAVSKS).

The polypeptide is SPbeta prophage-derived uncharacterized protein YorM (yorM) (Bacillus subtilis (strain 168)).